Reading from the N-terminus, the 713-residue chain is Probable 1-deoxy-D-xylulose-5-phosphate synthase 2, chloroplastic (713 aa).

The N-terminal 30 residues, methionine 1–arginine 30, are a transit peptide targeting the chloroplast. Thiamine diphosphate contacts are provided by residues histidine 140 and glycine 181–serine 183. Aspartate 212 contributes to the Mg(2+) binding site. Thiamine diphosphate is bound by residues glycine 213–alanine 214, asparagine 241, tyrosine 362, and glutamate 444. Asparagine 241 contacts Mg(2+).

The protein belongs to the transketolase family. DXPS subfamily. In terms of assembly, homodimer. Mg(2+) serves as cofactor. Requires thiamine diphosphate as cofactor.

It is found in the plastid. Its subcellular location is the chloroplast. It catalyses the reaction D-glyceraldehyde 3-phosphate + pyruvate + H(+) = 1-deoxy-D-xylulose 5-phosphate + CO2. It participates in metabolic intermediate biosynthesis; 1-deoxy-D-xylulose 5-phosphate biosynthesis; 1-deoxy-D-xylulose 5-phosphate from D-glyceraldehyde 3-phosphate and pyruvate: step 1/1. Its function is as follows. Catalyzes the acyloin condensation reaction between C atoms 2 and 3 of pyruvate and glyceraldehyde 3-phosphate to yield 1-deoxy-D-xylulose-5-phosphate (DXP). Is a limiting enzyme for plastidic isoprenoid biosynthesis and essential for chloroplast development. This is Probable 1-deoxy-D-xylulose-5-phosphate synthase 2, chloroplastic from Oryza sativa subsp. japonica (Rice).